Reading from the N-terminus, the 215-residue chain is SAGA complex/transcription factor TFIID complex subunit Taf10 (215 aa).

Residues 1–77 (MSDINNNEPA…SRERHGSNYV (77 aa)) are disordered. A compositionally biased stretch (polar residues) spans 23-42 (GNNSMSVDEQPETSSTNLPT). Basic and acidic residues predominate over residues 58–73 (NNEDSPKSDDSRERHG). The Histone-fold domain occupies 58–203 (NNEDSPKSDD…VDDLSAALNE (146 aa)).

Belongs to the TAF10 family. As to quaternary structure, component of the 1.8 MDa SAGA (Spt-Ada-Gcn5 acetyltransferase) complex, which is composed of 19 subunits tra1, spt7, taf5, ngg1/ada3, sgf73, spt20, spt8, taf12, taf6, hfi1/ada1, ubp8, gcn5, ada2, spt3, sgf29, taf10, taf9, sgf11 and sus1. The SAGA complex is composed of 4 modules, namely the HAT (histone acetyltransferase) module (gcn5, ada2, ngg1/ada3 and sgf29), the DUB (deubiquitinating) module (ubp8, sgf11, sgf73 and sus1), the core or TAF (TBP-associated factor) module (taf5, taf6, taf9, taf10 and taf12), and the Tra1 or SPT (Suppressor of Ty) module (tra1, hfi1/ada1, spt3, spt7, spt8 and spt20). The Tra1/SPT module binds activators, the core module recruits TBP (TATA-binding protein), the HAT module contains the histone H3 acetyltransferase gcn5, and the DUB module comprises the histone H2B deubiquitinase ubp8. Component of the 1.2 MDa TFIID complex, which is composed of TATA-binding protein (TBP) and the 14 TBP-associated factors (TAFs). It comprises 1 copy of each taf1, taf2, taf3, taf7, taf8, taf11, taf13, 2 copies of each taf4, taf5, taf6, taf9, taf10, taf12, and 3 copies of taf14. In TFIID, taf10 heterodimerizes with taf3 and taf8.

It is found in the nucleus. Its function is as follows. Functions as a component of both the DNA-binding general transcription initiation factor complex TFIID and the transcription coactivator SAGA complex. Binding of TFIID to a promoter (with or without TATA element) is the initial step in pre-initiation complex (PIC) formation. TFIID plays a key role in the regulation of gene expression by RNA polymerase II through different activities such as transcription activator interaction, core promoter recognition and selectivity, TFIIA and TFIIB interaction, chromatin modification (histone acetylation by TAF1), facilitation of DNA opening and initiation of transcription. SAGA acts as a general cofactor required for essentially all RNA polymerase II transcription. At the promoters, SAGA is required for transcription pre-initiation complex (PIC) recruitment. It influences RNA polymerase II transcriptional activity through different activities such as TBP interaction (via core/TAF module) and promoter selectivity, interaction with transcription activators (via Tra1/SPT module), and chromatin modification through histone acetylation (via HAT module) and deubiquitination (via DUB module). SAGA preferentially acetylates histones H3 (to form H3K9ac, H3K14ac, H3K18ac and H3K23ac) and H2B and deubiquitinates histone H2B. SAGA interacts with DNA via upstream activating sequences (UASs). This Schizosaccharomyces pombe (strain 972 / ATCC 24843) (Fission yeast) protein is SAGA complex/transcription factor TFIID complex subunit Taf10.